Here is a 303-residue protein sequence, read N- to C-terminus: Cilia- and flagella-associated protein 161 (303 aa).

Microtubule inner protein component of sperm flagellar doublet microtubules.

It localises to the cytoplasm. Its subcellular location is the cytoskeleton. It is found in the cilium axoneme. The protein resides in the flagellum axoneme. Microtubule inner protein (MIP) part of the dynein-decorated doublet microtubules (DMTs) in cilia axoneme, which is required for motile cilia beating. The sequence is that of Cilia- and flagella-associated protein 161 from Mus musculus (Mouse).